Reading from the N-terminus, the 170-residue chain is Adenine phosphoribosyltransferase (170 aa).

It belongs to the purine/pyrimidine phosphoribosyltransferase family. Homodimer.

The protein localises to the cytoplasm. It catalyses the reaction AMP + diphosphate = 5-phospho-alpha-D-ribose 1-diphosphate + adenine. The protein operates within purine metabolism; AMP biosynthesis via salvage pathway; AMP from adenine: step 1/1. Catalyzes a salvage reaction resulting in the formation of AMP, that is energically less costly than de novo synthesis. The chain is Adenine phosphoribosyltransferase from Mycoplasmopsis agalactiae (strain NCTC 10123 / CIP 59.7 / PG2) (Mycoplasma agalactiae).